The chain runs to 182 residues: Nucleoside-triphosphatase THEP1 (182 aa).

Residues 10-17 and 102-109 contribute to the ATP site; these read GRPGIGKT and VVVIDEIG.

The protein belongs to the THEP1 NTPase family.

The catalysed reaction is a ribonucleoside 5'-triphosphate + H2O = a ribonucleoside 5'-diphosphate + phosphate + H(+). Has nucleotide phosphatase activity towards ATP, GTP, CTP, TTP and UTP. May hydrolyze nucleoside diphosphates with lower efficiency. This is Nucleoside-triphosphatase THEP1 from Thermofilum pendens (strain DSM 2475 / Hrk 5).